The sequence spans 553 residues: MVQRLWVSRLLRHRKAQLLLINLLTFGLEVCLAAGITYVPPLLLEVGVEEKFMTMVLGIGPVLGLVSVPLLGSASDHWRGRYGRRRPFIWALSLGILLSLFLIPRAGWLAGLLCPDPRPLELALLILGVGLLDFCGQVCFTPLEALLSDLFRDPDHCRQAYSVYAFMISLGGCLGYLLPAIDWDTSALAPYLGTQEECLFGLLTLIFLTCVAATLLVAEEAALGPAEPAEGLSAPSLPSHCCPCWARLAFRNLGALLPRLHQLCCRMPRTLRRLFVAELCSWMALMTFTLFYTDFVGEGLYQGVPRAELGTEARRHYDEGVRMGSLGLFLQCAISLVFSLVMDRLVQRFGTRAVYLASVAAFPVAAGATCLSHSVAVVTASAALTGFTFSALQILPYTLASLYHRERQVFLPKYRGDAGGTSSEDSLMTSFLPGPKPGAPFPNGHVGAGGSGLLPPPPALCGASACDVSVRVVVGEPTEARVVPGRGICLDLAILDSAFLLSQVAPSLFMGSIVQLSQSVTAYMVSAAGLGLVAIYFATQVVFDKSDLAKYSV.

11 helical membrane-spanning segments follow: residues 19 to 39 (LLINLLTFGLEVCLAAGITYV), 52 to 72 (FMTMVLGIGPVLGLVSVPLLG), 88 to 108 (FIWALSLGILLSLFLIPRAGW), 120 to 140 (LELALLILGVGLLDFCGQVCF), 161 to 181 (YSVYAFMISLGGCLGYLLPAI), 198 to 218 (CLFGLLTLIFLTCVAATLLVA), 275 to 295 (FVAELCSWMALMTFTLFYTDF), 323 to 343 (MGSLGLFLQCAISLVFSLVMD), 353 to 373 (AVYLASVAAFPVAAGATCLSH), 382 to 402 (AALTGFTFSALQILPYTLASL), and 522 to 542 (AYMVSAAGLGLVAIYFATQVV).

Belongs to the glycoside-pentoside-hexuronide (GPH) cation symporter transporter (TC 2.A.2) family.

The protein localises to the membrane. It carries out the reaction sucrose(out) + H(+)(out) = sucrose(in) + H(+)(in). Proton-associated sucrose transporter. May be able to transport also glucose and fructose. This chain is Solute carrier family 45 member 3 (SLC45A3), found in Macaca fascicularis (Crab-eating macaque).